A 292-amino-acid chain; its full sequence is Large ribosomal subunit protein bL19m (292 aa).

The segment at Pro40–Val61 is disordered. Ser77 is modified (phosphoserine).

Belongs to the bacterial ribosomal protein bL19 family. As to quaternary structure, component of the mitochondrial ribosome large subunit (39S) which comprises a 16S rRNA and about 50 distinct proteins.

Its subcellular location is the mitochondrion. The chain is Large ribosomal subunit protein bL19m (MRPL19) from Pongo abelii (Sumatran orangutan).